We begin with the raw amino-acid sequence, 450 residues long: 5-amino-6-(D-ribitylamino)uracil--L-tyrosine 4-hydroxyphenyl transferase (450 aa).

Residues Met-1–Asp-24 form a disordered region. One can recognise a Radical SAM core domain in the interval Val-82 to Asp-350. Positions 96, 100, and 103 each coordinate [4Fe-4S] cluster. The segment at Pro-430–Asp-450 is disordered.

Belongs to the radical SAM superfamily. CofH family. As to quaternary structure, consists of two subunits, CofG and CofH. It depends on [4Fe-4S] cluster as a cofactor.

It carries out the reaction 5-amino-6-(D-ribitylamino)uracil + L-tyrosine + S-adenosyl-L-methionine = 5-amino-5-(4-hydroxybenzyl)-6-(D-ribitylimino)-5,6-dihydrouracil + 2-iminoacetate + 5'-deoxyadenosine + L-methionine + H(+). It functions in the pathway cofactor biosynthesis; coenzyme F0 biosynthesis. Catalyzes the radical-mediated synthesis of 5-amino-5-(4-hydroxybenzyl)-6-(D-ribitylimino)-5,6-dihydrouracil from 5-amino-6-(D-ribitylamino)uracil and L-tyrosine. The polypeptide is 5-amino-6-(D-ribitylamino)uracil--L-tyrosine 4-hydroxyphenyl transferase (Haloarcula marismortui (strain ATCC 43049 / DSM 3752 / JCM 8966 / VKM B-1809) (Halobacterium marismortui)).